Here is a 509-residue protein sequence, read N- to C-terminus: 2,3-bisphosphoglycerate-independent phosphoglycerate mutase (509 aa).

Mn(2+)-binding residues include Asp12 and Ser62. Ser62 (phosphoserine intermediate) is an active-site residue. Residues His123, 153–154, Arg185, Arg191, 260–263, and Lys333 contribute to the substrate site; these read RD and RPDR. Asp400, His404, Asp441, His442, and His460 together coordinate Mn(2+).

It belongs to the BPG-independent phosphoglycerate mutase family. In terms of assembly, monomer. Requires Mn(2+) as cofactor.

It catalyses the reaction (2R)-2-phosphoglycerate = (2R)-3-phosphoglycerate. Its pathway is carbohydrate degradation; glycolysis; pyruvate from D-glyceraldehyde 3-phosphate: step 3/5. In terms of biological role, catalyzes the interconversion of 2-phosphoglycerate and 3-phosphoglycerate. This Clostridium kluyveri (strain ATCC 8527 / DSM 555 / NBRC 12016 / NCIMB 10680 / K1) protein is 2,3-bisphosphoglycerate-independent phosphoglycerate mutase.